Here is a 172-residue protein sequence, read N- to C-terminus: Diphosphoinositol polyphosphate phosphohydrolase 1 (172 aa).

At Met1 the chain carries N-acetylmethionine. Residues Arg10, Lys18–Arg20, and Ser39–Arg41 contribute to the substrate site. Residues Tyr17–Thr142 enclose the Nudix hydrolase domain. The Mg(2+) site is built by Gly50 and Glu66. Residues Gly51–Gly72 carry the Nudix box motif. Glu69 functions as the Proton acceptor in the catalytic mechanism. Glu70 contributes to the Mg(2+) binding site. Substrate is bound by residues Arg89–His91, Arg115, and Lys133.

This sequence belongs to the Nudix hydrolase family. DIPP subfamily. Monomer. Mg(2+) is required as a cofactor. Requires Mn(2+) as cofactor. It depends on Zn(2+) as a cofactor. As to expression, widely expressed. Expressed at higher level in brain, heart, pancreas and liver. Also expressed in placenta, lung and kidney.

Its subcellular location is the cytoplasm. It is found in the nucleus. The catalysed reaction is diphospho-myo-inositol polyphosphate + H2O = myo-inositol polyphosphate + phosphate.. The enzyme catalyses 5-diphospho-1D-myo-inositol 1,2,3,4,6-pentakisphosphate + H2O = 1D-myo-inositol hexakisphosphate + phosphate + H(+). It carries out the reaction 3,5-bis(diphospho)-1D-myo-inositol 1,2,4,6-tetrakisphosphate + H2O = 3-diphospho-1D-myo-inositol 1,2,4,5,6-pentakisphosphate + phosphate + 2 H(+). It catalyses the reaction [phosphate](n+1) + n H2O = (n+1) phosphate + n H(+). The catalysed reaction is P(1),P(5)-bis(5'-adenosyl) pentaphosphate + H2O = ADP + ATP + 2 H(+). The enzyme catalyses P(1),P(6)-bis(5'-adenosyl) hexaphosphate + H2O = 2 ATP + 2 H(+). It carries out the reaction P(1),P(4)-bis(5'-adenosyl) tetraphosphate + H2O = AMP + ATP + 2 H(+). It catalyses the reaction a 5'-end (N(7)-methyl 5'-triphosphoguanosine)-ribonucleoside in mRNA + H2O = N(7)-methyl-GMP + a 5'-end diphospho-ribonucleoside in mRNA + 2 H(+). The catalysed reaction is a 5'-end (N(7)-methyl 5'-triphosphoguanosine)-ribonucleoside in mRNA + H2O = N(7)-methyl-GDP + a 5'-end phospho-ribonucleoside in mRNA + 2 H(+). Its activity is regulated as follows. Endopolyphospahatase activity is inhibited by NaF, NaPPi, beta-glycerol phosphate and heparin. 5-diphosphoinositol pentakisphosphate (5-InsP7) inhibits its mRNA decapping activity. Functionally, cleaves a beta-phosphate from the diphosphate groups in PP-InsP5 (diphosphoinositol pentakisphosphate) and [PP]2-InsP4 (bisdiphosphoinositol tetrakisphosphate), suggesting that it may play a role in signal transduction. InsP6 (inositol hexakisphosphate) is not a substrate. Acts as a negative regulator of the ERK1/2 pathway. Also able to catalyze the hydrolysis of dinucleoside oligophosphates, with diadenosine 5',5'''-P1,P6-hexaphosphate (Ap6A) and diadenosine 5',5'''- P1,P5-pentaphosphate (Ap5A) being the preferred substrates. The major reaction products are ADP and p4a from Ap6A and ADP and ATP from Ap5A. Also able to hydrolyze 5-phosphoribose 1-diphosphate. Acts as a decapping enzyme that modulates the stability of a subset of mRNAs implicated in cell motility. Hydrolyzes monomethylated capped RNA after both the alpha- and beta-phosphates generating m7GMP + ppRNA and m7GDP + pRNA. Can hydrolyze unmethylated capped RNAs. Divalent cations zinc, magnesium and manganese determine its substrate specificity. Exhibits diphosphoinositol polyphosphate phosphohydrolase in the presence of magnesium ions, diadenosine hexaphosphate hydrolase activity in the presence of manganese ions and endopolyphosphatase activity in the presence of zinc ions. Plays an important role in limiting DNA damage and maintaining cell survival upon oxidative stress via its endopolyphosphatase activity. The sequence is that of Diphosphoinositol polyphosphate phosphohydrolase 1 from Homo sapiens (Human).